The following is a 786-amino-acid chain: Protein SEY1 (786 aa).

Residues 1–684 (MSDLKEAIQL…KRSIVNTTER (684 aa)) lie on the Cytoplasmic side of the membrane. The GB1/RHD3-type G domain occupies 35–262 (GVKYHVISVF…QDASFFKDEY (228 aa)). Residue 45 to 52 (GSQSSGKS) participates in GTP binding. Residues 355 to 375 (KKVYEERRDDLIKQLNTIIDE) adopt a coiled-coil conformation. A helical transmembrane segment spans residues 685-705 (IPLYMYALVVALGWGRIITIL). Topologically, residues 706 to 708 (RNP) are lumenal. A helical transmembrane segment spans residues 709 to 729 (ATIILSIIVLAGAYFVHKLNL). The Cytoplasmic segment spans residues 730–786 (WGPLLQFANQATGQATAVLKQTVRSLVVDEEPKRKILVEPHESEGVDKEPSKNDQHL). Positions 765-786 (ILVEPHESEGVDKEPSKNDQHL) are disordered.

Belongs to the TRAFAC class dynamin-like GTPase superfamily. GB1/RHD3 GTPase family. RHD3 subfamily.

It localises to the endoplasmic reticulum membrane. Its function is as follows. Cooperates with the reticulon proteins and tubule-shaping DP1 family proteins to generate and maintain the structure of the tubular endoplasmic reticulum network. Has GTPase activity, which is required for its function in ER organization. The sequence is that of Protein SEY1 from Kluyveromyces lactis (strain ATCC 8585 / CBS 2359 / DSM 70799 / NBRC 1267 / NRRL Y-1140 / WM37) (Yeast).